The following is a 413-amino-acid chain: Aspartate aminotransferase, cytoplasmic (413 aa).

Residues Gly39 and Trp141 each coordinate L-aspartate. Position 149 is a phosphoserine (Ser149). Residue Asn195 participates in L-aspartate binding. At Lys259 the chain carries N6-(pyridoxal phosphate)lysine. Position 387 (Arg387) interacts with L-aspartate.

This sequence belongs to the class-I pyridoxal-phosphate-dependent aminotransferase family. As to quaternary structure, homodimer. Requires pyridoxal 5'-phosphate as cofactor.

It localises to the cytoplasm. The enzyme catalyses L-aspartate + 2-oxoglutarate = oxaloacetate + L-glutamate. The catalysed reaction is L-cysteine + 2-oxoglutarate = 2-oxo-3-sulfanylpropanoate + L-glutamate. It carries out the reaction (2S)-2-aminobutanoate + 2-oxoglutarate = 2-oxobutanoate + L-glutamate. It catalyses the reaction 3-sulfino-L-alanine + 2-oxoglutarate = 3-sulfinopyruvate + L-glutamate. Functionally, biosynthesis of L-glutamate from L-aspartate or L-cysteine. Important regulator of levels of glutamate, the major excitatory neurotransmitter of the vertebrate central nervous system. Acts as a scavenger of glutamate in brain neuroprotection. The aspartate aminotransferase activity is involved in hepatic glucose synthesis during development and in adipocyte glyceroneogenesis. Using L-cysteine as substrate, regulates levels of mercaptopyruvate, an important source of hydrogen sulfide. Mercaptopyruvate is converted into H(2)S via the action of 3-mercaptopyruvate sulfurtransferase (3MST). Hydrogen sulfide is an important synaptic modulator and neuroprotectant in the brain. This is Aspartate aminotransferase, cytoplasmic from Pongo abelii (Sumatran orangutan).